A 190-amino-acid polypeptide reads, in one-letter code: Potassium-transporting ATPase KdpC subunit (190 aa).

A helical membrane pass occupies residues 7-27 (PALLMLLVWTLITGVFYPVLV).

It belongs to the KdpC family. The system is composed of three essential subunits: KdpA, KdpB and KdpC.

It localises to the cell inner membrane. Part of the high-affinity ATP-driven potassium transport (or Kdp) system, which catalyzes the hydrolysis of ATP coupled with the electrogenic transport of potassium into the cytoplasm. This subunit acts as a catalytic chaperone that increases the ATP-binding affinity of the ATP-hydrolyzing subunit KdpB by the formation of a transient KdpB/KdpC/ATP ternary complex. The polypeptide is Potassium-transporting ATPase KdpC subunit (Methylococcus capsulatus (strain ATCC 33009 / NCIMB 11132 / Bath)).